A 235-amino-acid chain; its full sequence is Phosphoribosylaminoimidazole-succinocarboxamide synthase (235 aa).

This sequence belongs to the SAICAR synthetase family.

It catalyses the reaction 5-amino-1-(5-phospho-D-ribosyl)imidazole-4-carboxylate + L-aspartate + ATP = (2S)-2-[5-amino-1-(5-phospho-beta-D-ribosyl)imidazole-4-carboxamido]succinate + ADP + phosphate + 2 H(+). Its pathway is purine metabolism; IMP biosynthesis via de novo pathway; 5-amino-1-(5-phospho-D-ribosyl)imidazole-4-carboxamide from 5-amino-1-(5-phospho-D-ribosyl)imidazole-4-carboxylate: step 1/2. The protein is Phosphoribosylaminoimidazole-succinocarboxamide synthase of Clostridium botulinum (strain Eklund 17B / Type B).